The chain runs to 60 residues: Potassium channel toxin alpha-KTx 12.5 (60 aa).

Positions 1-22 (MNKLPILIFMLLVCSMFISSDC) are cleaved as a signal peptide. Cystine bridges form between Cys30–Cys51, Cys36–Cys56, and Cys40–Cys58.

It belongs to the short scorpion toxin superfamily. Potassium channel inhibitor family. Alpha-KTx 12 subfamily. As to expression, expressed by the venom gland.

It is found in the secreted. Its function is as follows. This recombinant toxin inhibits the mammalian voltage-gated potassium channels Kv1.3/KCNA3 (IC(50)=28 nM). Kv1.1/KCNA1 and Kv1.2/KCNA2 potassium channels are also weakly inhibited (IC(50)=1.73 uM and IC(50)=12.63 uM, respectively). This Lychas mucronatus (Chinese swimming scorpion) protein is Potassium channel toxin alpha-KTx 12.5.